The following is a 296-amino-acid chain: Phosphatidylserine decarboxylase proenzyme (296 aa).

Catalysis depends on charge relay system; for autoendoproteolytic cleavage activity residues aspartate 113, histidine 169, and serine 256. Catalysis depends on serine 256, which acts as the Schiff-base intermediate with substrate; via pyruvic acid; for decarboxylase activity. Position 256 is a pyruvic acid (Ser); by autocatalysis (serine 256).

This sequence belongs to the phosphatidylserine decarboxylase family. PSD-B subfamily. Prokaryotic type II sub-subfamily. As to quaternary structure, heterodimer of a large membrane-associated beta subunit and a small pyruvoyl-containing alpha subunit. It depends on pyruvate as a cofactor. Is synthesized initially as an inactive proenzyme. Formation of the active enzyme involves a self-maturation process in which the active site pyruvoyl group is generated from an internal serine residue via an autocatalytic post-translational modification. Two non-identical subunits are generated from the proenzyme in this reaction, and the pyruvate is formed at the N-terminus of the alpha chain, which is derived from the carboxyl end of the proenzyme. The autoendoproteolytic cleavage occurs by a canonical serine protease mechanism, in which the side chain hydroxyl group of the serine supplies its oxygen atom to form the C-terminus of the beta chain, while the remainder of the serine residue undergoes an oxidative deamination to produce ammonia and the pyruvoyl prosthetic group on the alpha chain. During this reaction, the Ser that is part of the protease active site of the proenzyme becomes the pyruvoyl prosthetic group, which constitutes an essential element of the active site of the mature decarboxylase.

It localises to the cell membrane. The enzyme catalyses a 1,2-diacyl-sn-glycero-3-phospho-L-serine + H(+) = a 1,2-diacyl-sn-glycero-3-phosphoethanolamine + CO2. It participates in phospholipid metabolism; phosphatidylethanolamine biosynthesis; phosphatidylethanolamine from CDP-diacylglycerol: step 2/2. Functionally, catalyzes the formation of phosphatidylethanolamine (PtdEtn) from phosphatidylserine (PtdSer). This Clostridium botulinum (strain Alaska E43 / Type E3) protein is Phosphatidylserine decarboxylase proenzyme.